The primary structure comprises 142 residues: Transcriptional regulator MraZ (142 aa).

2 SpoVT-AbrB domains span residues 5-51 (ASSL…PRPE) and 77-120 (AMDV…DKAT).

It belongs to the MraZ family. In terms of assembly, forms oligomers.

It is found in the cytoplasm. Its subcellular location is the nucleoid. This chain is Transcriptional regulator MraZ, found in Acidovorax ebreus (strain TPSY) (Diaphorobacter sp. (strain TPSY)).